Reading from the N-terminus, the 322-residue chain is Arginase (322 aa).

Positions 113, 141, 143, and 145 each coordinate Mn(2+). Substrate is bound by residues 143–147 (HADIN), 154–156 (SGN), and aspartate 200. The Mn(2+) site is built by aspartate 247 and aspartate 249. 2 residues coordinate substrate: threonine 261 and glutamate 292.

Belongs to the arginase family. Homotrimer. It depends on Mn(2+) as a cofactor.

It carries out the reaction L-arginine + H2O = urea + L-ornithine. It functions in the pathway nitrogen metabolism; urea cycle; L-ornithine and urea from L-arginine: step 1/1. This chain is Arginase (ARG), found in Coccidioides posadasii (strain C735) (Valley fever fungus).